A 1456-amino-acid chain; its full sequence is Leucine-rich repeat-containing protein 9 (1456 aa).

8 LRR repeats span residues 53 to 78 (FHNLSSLTIVAQDIREISGLETCLQL), 97 to 119 (CRNLEKLYLYYNKISKIENLEKL), 120 to 141 (IKLEVLWLNHNMIKNIEGLQTL), 142 to 164 (KNLKDLNLAGNLVSSIGRCLDPN), 166 to 188 (QLEKLNLSGNQITSFKDLTNLTK), 190 to 212 (TRLKDLCLNDPQYKSNPVCQLCN), 224 to 248 (LQRLDTFDVSAKQIKELADSTAMKK), and 264 to 287 (NEELEKLNDRKCKLQKLPEERIKL). Positions 305–325 (SSKGQSDTTPEAEKPRNSEVV) are disordered. The LRR 9 repeat unit spans residues 339-362 (LSALDDRVTFWNKKLHEIEAIYRT). Tyr-525 bears the Phosphotyrosine mark. 23 LRR repeats span residues 661–683 (KPRPKLISLDEKTIISLAKTNIY), 684–705 (SHIVNLNLHGNSLSKLRDLAKL), 706–727 (TGLRKLNISFNEFTCLDDVYHL), 729–748 (NLEYLDASHNHVITLEGFRG), 749–772 (LMKLKHLDLSWNQLKKTGEEINVL), 776–802 (TTSLLTLDIQHNPWQKPATLRLSVIGR), 806–833 (LTHLDGLVISEEETRAALKFISGTKITQ), 876–898 (YSKITALNLDGQHLFEITNLEKL), 899–920 (ENLKWASFSNNNLSKMEGLESC), 921–942 (VNLEELTLDGNCISKIEGITRL), 943–965 (TKLSRLSMNNNLLTGLEKHTFDN), 967–991 (LHLHSLSLENNRITSLSALQKTFTL), 993–1010 (ELYISNNYIAVNQEIYNL), 1013–1037 (LCNLVILDMYGNIIIWNQENYRFFV), 1082–1105 (FIQMQELNWTSSAIRTVDLIPVDH), 1106–1128 (FRNVSNVNLQNNNLTSFSGLIYL), 1129–1151 (PNVKVLCLNYNHIESIMPRLKPQ), 1191–1214 (MQSLEVLHLGYNGICNLVQLQLNR), 1215–1237 (LRNLKFLFLQGNEISQVEGLDNL), 1238–1260 (IVLQELVVDHNRIRAFNDTAFSK), 1262–1283 (SSLLMLHLEENRLRELSKLQSL), 1284–1307 (VKLEKLFLGYNKIQDITELEKLDV), and 1309–1335 (PSLRELTVYGNPICRKMVHRHVLIFRL).

This chain is Leucine-rich repeat-containing protein 9 (Lrrc9), found in Mus musculus (Mouse).